Consider the following 214-residue polypeptide: ER lumen protein-retaining receptor (214 aa).

At 1-4 the chain is on the lumenal side; the sequence is MVFN. Residues 5 to 23 form a helical membrane-spanning segment; it reads LFRISADLVHLLSIYFLLT. Residues 24 to 37 are Cytoplasmic-facing; that stretch reads KIISHKNCIGISLR. The helical transmembrane segment at 38–55 threads the bilayer; that stretch reads SQILFFIVWVTRYLDIFY. Residues 56-63 are Lumenal-facing; sequence NFYSLYNT. Residues 64 to 82 traverse the membrane as a helical segment; the sequence is ILKIVYLTTSAYTIYLISK. The Cytoplasmic segment spans residues 83–98; sequence RFRATYDKIHDTLNVW. A helical transmembrane segment spans residues 99–112; sequence YLIVPCIVLAFIFT. Topologically, residues 113 to 119 are lumenal; sequence EDYSITE. The helical transmembrane segment at 120–139 threads the bilayer; it reads ICWTFSIFLEAVAILPQILL. The Cytoplasmic segment spans residues 140–151; the sequence is LRSTGEVENLNS. Residues 152 to 170 form a helical membrane-spanning segment; the sequence is QYIFCLGLYRALYIINWIY. Residues 171–181 lie on the Lumenal side of the membrane; it reads RYATEQSYWSP. A helical transmembrane segment spans residues 182–202; it reads LTWICGSIQTLLYVEYFYYYI. At 203–214 the chain is on the cytoplasmic side; it reads KSRVEGTKFVLP.

This sequence belongs to the ERD2 family.

The protein resides in the endoplasmic reticulum membrane. In terms of biological role, required for the retention of luminal endoplasmic reticulum proteins. Determines the specificity of the luminal ER protein retention system. Also required for normal vesicular traffic through the Golgi. In Entamoeba histolytica (strain ATCC 30459 / HM-1:IMSS / ABRM), this protein is ER lumen protein-retaining receptor.